The primary structure comprises 589 residues: MEAEETMECLQEFPEHHKMILDRLNEQREQDRFTDITLIVDGHHFKAHKAVLAACSKFFYKFFQEFTQEPLVEIEGVSKMAFRHLIEFTYTAKLMIQGEEEANDVWKAAEFLQMLEAIKALEVRNKENSAPLEENTTGKNEAKKRKIAETSNVITESLPSAESEPVEIEVEIAEGTIEVEDEGVETLEEVASAKQSVKYIQSTGSSDDSALALLADITSKYRQGDRKGQIKEDGCPSDPTSKQEHMKSHSTESFKCEICNKRYLRESAWKQHLNCYHLEEGGVSKKQRTGKKIHVCQYCEKQFDHFGHFKEHLRKHTGEKPFECPNCHERFARNSTLKCHLTACQTGVGAKKGRKKLYECQVCNSVFNSWDQFKDHLVIHTGDKPNHCTLCDLWFMQGNELRRHLSDAHNISERLVTEEVLSVETRVQTEPVTSMTIIEQVGKVHVLPLLQVQVDSAQVTVEQVHPDLLQGSQVHDSHMSELPEQVQVSYLEVGRIQTEEGTEVHVEELHVERVNQMPVEVQTELLEADLDHATPEIMNQEERESSQADAAEAAREDHEDAEDLETKPTVDSEAEKAENEDRTAMPVLE.

The region spanning 34–98 (TDITLIVDGH…TYTAKLMIQG (65 aa)) is the BTB domain. The Nuclear localization signal 1 motif lies at 137–148 (TGKNEAKKRKIA). Residues 224–234 (GDRKGQIKEDG) show a composition bias toward basic and acidic residues. Residues 224 to 247 (GDRKGQIKEDGCPSDPTSKQEHMK) are disordered. 2 consecutive C2H2-type zinc fingers follow at residues 254–277 (FKCEICNKRYLRESAWKQHLNCYH) and 294–316 (HVCQYCEKQFDHFGHFKEHLRKH). Glycyl lysine isopeptide (Lys-Gly) (interchain with G-Cter in SUMO2) cross-links involve residues lysine 255 and lysine 261. The Nuclear localization signal 2 motif lies at 283 to 294 (VSKKQRTGKKIH). A C2H2-type 3; degenerate zinc finger spans residues 322 to 347 (FECPNCHERFARNSTLKCHLTACQTG). 2 consecutive C2H2-type zinc fingers follow at residues 358-380 (YECQVCNSVFNSWDQFKDHLVIH) and 386-409 (NHCTLCDLWFMQGNELRRHLSDAH). The segment covering 539–583 (NQEERESSQADAAEAAREDHEDAEDLETKPTVDSEAEKAENEDRT) has biased composition (basic and acidic residues). A disordered region spans residues 539-589 (NQEERESSQADAAEAAREDHEDAEDLETKPTVDSEAEKAENEDRTAMPVLE). Residue lysine 567 forms a Glycyl lysine isopeptide (Lys-Gly) (interchain with G-Cter in SUMO) linkage.

The protein belongs to the krueppel C2H2-type zinc-finger protein family. Monosumoylated at Lys-567 by CBX4 and UHRF2. Sumoylation may potentiate ZNF131 inhibition of estrogen signaling. Sumoylation does not interfere with ubiquitination. Post-translationally, ubiquitinated.

It is found in the nucleus. Its function is as follows. May be involved in transcriptional regulation as a repressor of ESR1/ER-alpha signaling. Plays a role during development and organogenesis as well as in the function of the adult central nervous system. In Pongo abelii (Sumatran orangutan), this protein is Zinc finger protein 131 (ZNF131).